Reading from the N-terminus, the 232-residue chain is Large ribosomal subunit protein uL1 (232 aa).

Belongs to the universal ribosomal protein uL1 family. In terms of assembly, part of the 50S ribosomal subunit.

Binds directly to 23S rRNA. The L1 stalk is quite mobile in the ribosome, and is involved in E site tRNA release. Functionally, protein L1 is also a translational repressor protein, it controls the translation of the L11 operon by binding to its mRNA. The protein is Large ribosomal subunit protein uL1 of Liberibacter asiaticus (Citrus greening disease).